Consider the following 199-residue polypeptide: Superoxide dismutase [Mn/Fe] 1 (199 aa).

The Fe(3+) site is built by histidine 27, histidine 81, aspartate 161, and histidine 165. Residues histidine 27, histidine 81, aspartate 161, and histidine 165 each contribute to the Mn(2+) site.

The protein belongs to the iron/manganese superoxide dismutase family. As to quaternary structure, homodimer. Can also form a heterodimer with SodM. Mn(2+) is required as a cofactor. It depends on Fe(3+) as a cofactor.

It catalyses the reaction 2 superoxide + 2 H(+) = H2O2 + O2. Destroys superoxide anion radicals which are normally produced within the cells and which are toxic to biological systems. Catalyzes the dismutation of superoxide anion radicals into O2 and H2O2 by successive reduction and oxidation of the transition metal ion at the active site. This is Superoxide dismutase [Mn/Fe] 1 (sodA) from Staphylococcus aureus (strain USA300).